We begin with the raw amino-acid sequence, 628 residues long: Otolith matrix protein OMM-64 (628 aa).

The N-terminal stretch at 1 to 20 is a signal peptide; sequence MLSRLLIVPLIFALAGLAIS. Residues 43–628 are disordered; sequence KGDKDGGGLT…AAATALAAQS (586 aa). Residues 78–93 show a composition bias toward low complexity; it reads DSSPDTTDTPDASSSD. The span at 182-214 shows a compositional bias: polar residues; the sequence is TESPGSDSAESPGSDSAESPGSDSTESPGSDST. Basic and acidic residues-rich tracts occupy residues 246–266, 276–285, and 311–343; these read ETDKDDDKSDDKSDADAATDK, ELDGKAHAED, and RPEKDVKNDSDDSKDTTEDDKPDKDDKKNRDSA. N-linked (GlcNAc...) asparagine glycosylation occurs at Asn-318. Composition is skewed to acidic residues over residues 449–462, 477–489, 514–536, 544–556, and 565–578; these read DSQEDSVDESEAEP, EPQEDDSEEDTDD, DKEDMDKDDMDKDDMDKDDMDKD, DSVDDQSESDAEP, and DEIDGEETMTPDSE. The segment covering 613–628 has biased composition (low complexity); sequence ASQAADAAATALAAQS.

As to expression, specifically expressed in otolith matrix-producing cells.

It localises to the secreted. The protein resides in the extracellular space. It is found in the extracellular matrix. Functionally, calcium-binding component of otoliths, a calcium carbonate structure of the inner ear involved in hearing and balance sensing. Binds calcium. In Oncorhynchus mykiss (Rainbow trout), this protein is Otolith matrix protein OMM-64.